We begin with the raw amino-acid sequence, 275 residues long: Rhamnulose-1-phosphate aldolase (275 aa).

Residue glutamate 117 is part of the active site. Residues histidine 141, histidine 143, and histidine 212 each coordinate Zn(2+).

The protein belongs to the aldolase class II family. RhaD subfamily. In terms of assembly, homotetramer. The cofactor is Zn(2+).

It is found in the cytoplasm. It carries out the reaction L-rhamnulose 1-phosphate = (S)-lactaldehyde + dihydroxyacetone phosphate. It participates in carbohydrate degradation; L-rhamnose degradation; glycerone phosphate from L-rhamnose: step 3/3. Its function is as follows. Catalyzes the reversible cleavage of L-rhamnulose-1-phosphate to dihydroxyacetone phosphate (DHAP) and L-lactaldehyde. The chain is Rhamnulose-1-phosphate aldolase from Salmonella choleraesuis (strain SC-B67).